A 61-amino-acid chain; its full sequence is Potassium channel toxin alpha-KTx 15.6 (61 aa).

The N-terminal stretch at 1 to 23 is a signal peptide; that stretch reads MKAFYGMLVIFILCSTCYISVDS. Glutamine 24 is modified (pyrrolidone carboxylic acid). 3 disulfides stabilise this stretch: cysteine 31-cysteine 52, cysteine 37-cysteine 57, and cysteine 41-cysteine 59.

The protein belongs to the short scorpion toxin superfamily. Potassium channel inhibitor family. Alpha-KTx 15 subfamily. Expressed by the venom gland.

It is found in the secreted. In terms of biological role, irreversibly blocks the A-type voltage-gated potassium channels in rat cerebellum granular cells (190 nM induce 50% inhibitory effect) (IC(50)=190 nM). Also weakly inhibits Kv1.2/KCNA2 and Kv1.3/KCNA3. The sequence is that of Potassium channel toxin alpha-KTx 15.6 from Tityus discrepans (Venezuelan scorpion).